Here is a 667-residue protein sequence, read N- to C-terminus: Beta-galactosidase LacZ (667 aa).

R109 is a substrate binding site. C113 serves as a coordination point for Zn(2+). N147 is a substrate binding site. The Proton donor role is filled by E148. Zn(2+) is bound by residues C153, C155, and C158. Residue E307 is the Nucleophile of the active site. Substrate is bound by residues W315 and 355 to 358 (EKFH).

Belongs to the glycosyl hydrolase 42 family.

The enzyme catalyses Hydrolysis of terminal non-reducing beta-D-galactose residues in beta-D-galactosides.. Functionally, catalyzes the hydrolysis of lactose to its constituent monosaccharides glucose and galactose. This Lactobacillus acidophilus (strain ATCC 700396 / NCK56 / N2 / NCFM) protein is Beta-galactosidase LacZ.